We begin with the raw amino-acid sequence, 380 residues long: MTPTMRKFHPLLKFINYSFIDLPTPSNISASWNFGSLLGLCLIAQIATGLFLAMHYTADTSLAFSSIAHICRDVNNGWLLRNLHANGASFFFICIYFHIGRGLYYGSYLYKETWNIGVILLFLLMATAFVGYVLPWGQMSFWGATVITNLLSAAPYIGSNLVQWIWGGFSVDNATLTRFFTFHFILPFIITAVSLIHLLFLHQTGSSNPTGLNSNLDKVSFHPYFSYKDLLGFVIMLGALASLSTFAPNLLGDPDNFTPANPLVTPPHIKPEWYLLFAYAILRSIPNKLGGVLAVVLSIMVLFLMPIIHTSKLRSLMFRPIAKTFFWALIANTAILTWIGGQPVEDPFITIGQIASGLYFLIFVLLIPSLGLLENKLLKI.

The next 4 membrane-spanning stretches (helical) occupy residues 34 to 54 (FGSLLGLCLIAQIATGLFLAM), 78 to 99 (WLLRNLHANGASFFFICIYFHI), 114 to 134 (WNIGVILLFLLMATAFVGYVL), and 179 to 199 (FFTFHFILPFIITAVSLIHLL). Residues His84 and His98 each contribute to the heme b site. 2 residues coordinate heme b: His183 and His197. His202 provides a ligand contact to a ubiquinone. 4 consecutive transmembrane segments (helical) span residues 227 to 247 (YKDLLGFVIMLGALASLSTFA), 289 to 309 (LGGVLAVVLSIMVLFLMPIIH), 321 to 341 (IAKTFFWALIANTAILTWIGG), and 348 to 368 (FITIGQIASGLYFLIFVLLIP).

Belongs to the cytochrome b family. In terms of assembly, the cytochrome bc1 complex contains 3 respiratory subunits (MT-CYB, CYC1 and UQCRFS1), 2 core proteins (UQCRC1 and UQCRC2) and probably 6 low-molecular weight proteins. Requires heme b as cofactor.

Its subcellular location is the mitochondrion inner membrane. Functionally, component of the ubiquinol-cytochrome c reductase complex (complex III or cytochrome b-c1 complex) that is part of the mitochondrial respiratory chain. The b-c1 complex mediates electron transfer from ubiquinol to cytochrome c. Contributes to the generation of a proton gradient across the mitochondrial membrane that is then used for ATP synthesis. This is Cytochrome b (mt-cyb) from Rana amurensis (Siberian wood frog).